The primary structure comprises 186 residues: MLFYHGSRSPYPWSLCWLDEFADPTTARKLYNAAFPLVDVTVVPDDEIVQHRRVALLELIQKHIRQRDLMGLIDQLVVLLVTECANDSQITALLNYILLTGDEARFNEFISELTRRMPQHRERIMTIAERIHNDGYIKGEQRILRLLLQNGADPEWIQKITGLSAEQMQALRQPLPERERYSWLKS.

It belongs to the Rpn/YhgA-like nuclease family.

This pseudogene is the C-terminal fragment of low activity DNA endonuclease RpnD which probably yields 3'-hydroxyl ends. The intact protein can be seen in this entry (AC B7NGZ6). Expression of the repaired protein increases the frequency of recA-independent recombination, but also decreases viability probably via DNA damage; in a RecA strain expression has no effect on viability but does induce the SOS repair response. May play a role in horizontal gene transfer. This chain is Putative inactive recombination-promoting nuclease-like protein YjiQ (yjiQ), found in Escherichia coli (strain K12).